The primary structure comprises 386 residues: Homeobox protein Hox-A13 (386 aa).

The homeobox DNA-binding region spans 320-379 (GRKKRVPYTKVQLKELEREYATNKFITKDKRRRISATTNLSERQVTIWFQNRRVKEKKVI).

Belongs to the Abd-B homeobox family. Binds DNA as a homodimer. Interacts with MEIS1, MEIS2 and MEIS3.

Its subcellular location is the nucleus. Sequence-specific, AT-rich binding transcription factor which is part of a developmental regulatory system that provides cells with specific positional identities on the anterior-posterior axis. The polypeptide is Homeobox protein Hox-A13 (Hoxa13) (Mus musculus (Mouse)).